The following is a 540-amino-acid chain: Signal peptide peptidase-like 3 (540 aa).

The first 28 residues, 1–28, serve as a signal peptide directing secretion; the sequence is MSSFDPPNHRYSALVLILLLLGFSVAAA. The Lumenal portion of the chain corresponds to 29–194; sequence DDVSWTEDSS…LYAPKRPAVD (166 aa). The PA domain maps to 98–172; the sequence is SHLSSRLDGH…ISKSSGDALN (75 aa). Asparagine 155 and asparagine 172 each carry an N-linked (GlcNAc...) asparagine glycan. Residues 195–215 traverse the membrane as a helical segment; sequence LTAGLLLLMAVGTVVVASLWS. The Cytoplasmic portion of the chain corresponds to 216-250; sequence ELTDPDQANESYSILAKDVSSAGTRKDDPEKEILD. The helical transmembrane segment at 251 to 273 threads the bilayer; sequence ISVTGAVFFIVTASIFLLLLFYF. Residues 274–276 are Lumenal-facing; it reads MSS. Residues 277–299 traverse the membrane as a helical segment; that stretch reads WFVWVLTIFFCIGGMQGMHNIIM. Residues 300-321 lie on the Cytoplasmic side of the membrane; the sequence is AVILRKCRHLARKSVKLPLLGT. A helical membrane pass occupies residues 322–342; sequence MSVLSLLVNIVCLAFAVFWFI. The Lumenal portion of the chain corresponds to 343-347; sequence KRHTS. A helical transmembrane segment spans residues 348 to 368; sequence YSWVGQDILGICLMITALQVV. Over 369 to 377 the chain is Cytoplasmic; that stretch reads RLPNIKVAT. The chain crosses the membrane as a helical span at residues 378–398; it reads VLLCCAFVYDIFWVFISPLIF. The active site involves aspartate 387. The Lumenal portion of the chain corresponds to 399–429; that stretch reads HESVMIVVAQGDSSTGESIPMLLRIPRFFDP. The helical transmembrane segment at 430–450 threads the bilayer; sequence WGGYDMIGFGDILFPGLLISF. Residue aspartate 440 is part of the active site. The Cytoplasmic segment spans residues 451–466; it reads ASRYDKIKKRVISNGY. The helical transmembrane segment at 467 to 487 threads the bilayer; sequence FLWLTIGYGIGLLLTYLGLYL. Topologically, residues 488-492 are lumenal; that stretch reads MDGHG. A helical membrane pass occupies residues 493 to 513; the sequence is QPALLYIVPCTLGLAVILGLV. The PAL signature appears at 494 to 496; sequence PAL. The Cytoplasmic portion of the chain corresponds to 514–540; that stretch reads RGELKELWNYGIEESESHTPEDPMPVA.

It belongs to the peptidase A22B family. In terms of processing, glycosylated. Ubiquitous.

Its subcellular location is the endosome membrane. In terms of biological role, intramembrane-cleaving aspartic protease (I-CLiP) that cleaves type II membrane signal peptides in the hydrophobic plane of the membrane. This chain is Signal peptide peptidase-like 3 (SPPL3), found in Arabidopsis thaliana (Mouse-ear cress).